A 277-amino-acid polypeptide reads, in one-letter code: Sulfur carrier protein FdhD (277 aa).

C121 (cysteine persulfide intermediate) is an active-site residue. 260–265 is a binding site for Mo-bis(molybdopterin guanine dinucleotide); sequence FCKPGR.

The protein belongs to the FdhD family.

Its subcellular location is the cytoplasm. Its function is as follows. Required for formate dehydrogenase (FDH) activity. Acts as a sulfur carrier protein that transfers sulfur from IscS to the molybdenum cofactor prior to its insertion into FDH. In Escherichia coli O6:H1 (strain CFT073 / ATCC 700928 / UPEC), this protein is Sulfur carrier protein FdhD.